The chain runs to 106 residues: ATP-dependent Clp protease adapter protein ClpS (106 aa).

Positions 1–13 are enriched in basic and acidic residues; that stretch reads MPRKTSHEHDHGL. Residues 1–21 are disordered; it reads MPRKTSHEHDHGLVVETSKPE.

It belongs to the ClpS family. In terms of assembly, binds to the N-terminal domain of the chaperone ClpA.

In terms of biological role, involved in the modulation of the specificity of the ClpAP-mediated ATP-dependent protein degradation. This is ATP-dependent Clp protease adapter protein ClpS from Xanthomonas campestris pv. campestris (strain 8004).